We begin with the raw amino-acid sequence, 289 residues long: Melatonin receptor type 1B (289 aa).

At 1-2 the chain is on the cytoplasmic side; the sequence is GN. Residues 3 to 23 form a helical membrane-spanning segment; the sequence is AFVVSLALADLVVALYPYPLV. Residues 24-41 are Extracellular-facing; sequence LLAIFHNGWTLGEMHCKV. A disulfide bridge connects residues C39 and C116. The chain crosses the membrane as a helical span at residues 42 to 62; that stretch reads SGFVMGLSVIGSIFNITAIAI. Topologically, residues 63 to 81 are cytoplasmic; sequence NRYCYICHSFAYDKVYSCW. Residues 82 to 102 traverse the membrane as a helical segment; sequence NTMLYVSLIWVLTVIATVPNF. Topologically, residues 103–126 are extracellular; the sequence is FVGSLKYDPRIYSCTFVQTASSYY. A helical membrane pass occupies residues 127–147; it reads TIAVVVIHFIVPITVVSFCYL. At 148–179 the chain is on the cytoplasmic side; sequence RIWVLVLQVRRRVKSETKPRLKPSDFRNFLTM. The chain crosses the membrane as a helical span at residues 180–200; the sequence is FVVFVIFAFCWAPLNFIGLAV. Topologically, residues 201–213 are extracellular; sequence AINPSEMAPKVPE. Residues 214-234 traverse the membrane as a helical segment; sequence WLFIISYFMAYFNSCLNAIIY. The Cytoplasmic portion of the chain corresponds to 235–289; it reads GLLNQNFRNEYKRILMSLWMPRLFFQDTSKGGTDGQKSKPSPALNNNDQMKTDTL. The tract at residues 264 to 289 is disordered; it reads KGGTDGQKSKPSPALNNNDQMKTDTL.

Belongs to the G-protein coupled receptor 1 family. As to expression, brain and kidney, with trace levels in lungs.

Its subcellular location is the cell membrane. Functionally, high affinity receptor for melatonin. The activity of this receptor is mediated by pertussis toxin sensitive G proteins that inhibits adenylate cyclase activity. The chain is Melatonin receptor type 1B from Gallus gallus (Chicken).